A 134-amino-acid polypeptide reads, in one-letter code: Phosphoribosyl-AMP cyclohydrolase (134 aa).

Residue aspartate 77 coordinates Mg(2+). Cysteine 78 is a binding site for Zn(2+). The Mg(2+) site is built by aspartate 79 and aspartate 81. Residues cysteine 95 and cysteine 102 each coordinate Zn(2+).

The protein belongs to the PRA-CH family. In terms of assembly, homodimer. The cofactor is Mg(2+). Zn(2+) serves as cofactor.

It is found in the cytoplasm. The catalysed reaction is 1-(5-phospho-beta-D-ribosyl)-5'-AMP + H2O = 1-(5-phospho-beta-D-ribosyl)-5-[(5-phospho-beta-D-ribosylamino)methylideneamino]imidazole-4-carboxamide. Its pathway is amino-acid biosynthesis; L-histidine biosynthesis; L-histidine from 5-phospho-alpha-D-ribose 1-diphosphate: step 3/9. In terms of biological role, catalyzes the hydrolysis of the adenine ring of phosphoribosyl-AMP. In Pseudomonas paraeruginosa (strain DSM 24068 / PA7) (Pseudomonas aeruginosa (strain PA7)), this protein is Phosphoribosyl-AMP cyclohydrolase.